The sequence spans 616 residues: MPKYRSATTTHGRNMAGARALWRATGMTDADFGKPIIAVVNSFTQFVPGHVHLRDLGKLVAEQIEAAGGVAKEFNTIAVDDGIAMGHGGMLYSLPSRELIADSVEYMVNAHCADAMVCISNCDKITPGMLMASLRLNIPVIFVSGGPMEAGKTKLSDQIIKLDLVDAMIQGADPKVSDSQSDQVERSACPTCGSCSGMFTANSMNCLTEALGLSQPGNGSLLATHADRKQLFLNAGKRIVELTKRYYEQNDESALPRNIASKAAFENAMTLDIAMGGSTNTVLHLLAAAQEAEIDFTMSDIDKLSRKVPQLCKVAPSTQKYHMEDVHRAGGVIGILGELDRAGLLNRDVKNVLGLTLPQTLEQYDVMLTQDDSVKNMFRAGPAGIRTTQAFSQDCRWDSLDDDRANGCIRSLEHAYSKEGGLAVLYGNFAENGCIVKTAGVDDSILKFTGPAKVYESQDDAVEAILGGKVVAGDVVVIRYEGPKGGPGMQEMLYPTSFLKSMGLGKACALITDGRFSGGTSGLSIGHVSPEAASGGSIGLIEDGDLIAIDIPNRGIQLQVSDAELAARREAQEARGDKAWTPKNRERQVSFALRAYASLATSADKGAVRDKSKLGG.

Aspartate 81 serves as a coordination point for Mg(2+). Residue cysteine 122 participates in [2Fe-2S] cluster binding. The Mg(2+) site is built by aspartate 123 and lysine 124. The residue at position 124 (lysine 124) is an N6-carboxylysine. Cysteine 195 serves as a coordination point for [2Fe-2S] cluster. Glutamate 491 serves as a coordination point for Mg(2+). Serine 517 functions as the Proton acceptor in the catalytic mechanism.

It belongs to the IlvD/Edd family. As to quaternary structure, homodimer. Requires [2Fe-2S] cluster as cofactor. Mg(2+) is required as a cofactor.

The catalysed reaction is (2R)-2,3-dihydroxy-3-methylbutanoate = 3-methyl-2-oxobutanoate + H2O. The enzyme catalyses (2R,3R)-2,3-dihydroxy-3-methylpentanoate = (S)-3-methyl-2-oxopentanoate + H2O. It functions in the pathway amino-acid biosynthesis; L-isoleucine biosynthesis; L-isoleucine from 2-oxobutanoate: step 3/4. It participates in amino-acid biosynthesis; L-valine biosynthesis; L-valine from pyruvate: step 3/4. Functionally, functions in the biosynthesis of branched-chain amino acids. Catalyzes the dehydration of (2R,3R)-2,3-dihydroxy-3-methylpentanoate (2,3-dihydroxy-3-methylvalerate) into 2-oxo-3-methylpentanoate (2-oxo-3-methylvalerate) and of (2R)-2,3-dihydroxy-3-methylbutanoate (2,3-dihydroxyisovalerate) into 2-oxo-3-methylbutanoate (2-oxoisovalerate), the penultimate precursor to L-isoleucine and L-valine, respectively. This is Dihydroxy-acid dehydratase from Escherichia coli (strain SMS-3-5 / SECEC).